We begin with the raw amino-acid sequence, 303 residues long: UDP-N-acetylenolpyruvoylglucosamine reductase (303 aa).

Positions 28-195 constitute an FAD-binding PCMH-type domain; the sequence is KTGGPAQYLA…ISATFGLEPG (168 aa). Arg174 is an active-site residue. Ser224 (proton donor) is an active-site residue. Residue Glu294 is part of the active site.

The protein belongs to the MurB family. FAD is required as a cofactor.

It localises to the cytoplasm. It carries out the reaction UDP-N-acetyl-alpha-D-muramate + NADP(+) = UDP-N-acetyl-3-O-(1-carboxyvinyl)-alpha-D-glucosamine + NADPH + H(+). It functions in the pathway cell wall biogenesis; peptidoglycan biosynthesis. Cell wall formation. In Lactobacillus gasseri (strain ATCC 33323 / DSM 20243 / BCRC 14619 / CIP 102991 / JCM 1131 / KCTC 3163 / NCIMB 11718 / NCTC 13722 / AM63), this protein is UDP-N-acetylenolpyruvoylglucosamine reductase.